A 359-amino-acid chain; its full sequence is Dihydroorotate dehydrogenase (quinone) (359 aa).

FMN is bound by residues 68-72 (AGFDK) and T92. Position 72 (K72) interacts with substrate. A substrate-binding site is contributed by 117-121 (NRMGF). Residues N145 and N176 each contribute to the FMN site. Substrate is bound at residue N176. The active-site Nucleophile is S179. A substrate-binding site is contributed by N181. K212 and T240 together coordinate FMN. 241–242 (NT) serves as a coordination point for substrate. Residues G266, G295, and 316 to 317 (YT) each bind FMN.

It belongs to the dihydroorotate dehydrogenase family. Type 2 subfamily. In terms of assembly, monomer. It depends on FMN as a cofactor.

It is found in the cell membrane. It carries out the reaction (S)-dihydroorotate + a quinone = orotate + a quinol. It participates in pyrimidine metabolism; UMP biosynthesis via de novo pathway; orotate from (S)-dihydroorotate (quinone route): step 1/1. In terms of biological role, catalyzes the conversion of dihydroorotate to orotate with quinone as electron acceptor. This Corynebacterium striatum protein is Dihydroorotate dehydrogenase (quinone).